We begin with the raw amino-acid sequence, 247 residues long: tRNA (guanine-N(1)-)-methyltransferase (247 aa).

An S-adenosyl-L-methionine-binding site is contributed by Gly126.

It belongs to the RNA methyltransferase TrmD family. Homodimer.

Its subcellular location is the cytoplasm. It catalyses the reaction guanosine(37) in tRNA + S-adenosyl-L-methionine = N(1)-methylguanosine(37) in tRNA + S-adenosyl-L-homocysteine + H(+). Its function is as follows. Specifically methylates guanosine-37 in various tRNAs. In Jannaschia sp. (strain CCS1), this protein is tRNA (guanine-N(1)-)-methyltransferase.